The following is a 286-amino-acid chain: Protein NipSnap homolog 2 (286 aa).

Residues 1-40 (MATRVLHSSCSGLYRAAGPARGKGHATAVIRSLSASHNRP) constitute a mitochondrion transit peptide.

This sequence belongs to the NipSnap family.

It localises to the mitochondrion matrix. Protein involved in mitophagy. Accumulates on the mitochondria surface in response to mitochondrial depolarization and acts as a 'eat me' signal by recruiting proteins involved in selective autophagy. The sequence is that of Protein NipSnap homolog 2 (nipsnap2) from Danio rerio (Zebrafish).